The chain runs to 270 residues: Undecaprenyl-diphosphatase (270 aa).

The next 7 membrane-spanning stretches (helical) occupy residues 3-23 (TIVTAILLGIVEGLTEFLPVS), 42-62 (WAMFNVVIQLGAILAVVVQYW), 86-106 (LLAAFIPSAILGLALKKYIDV), 108-128 (LGSPSVVCWALIAGGIAILVI), 184-204 (AEFSFFLAIPTMLGATTLELL), 217-237 (VGWSEIGVGFAVSFVVALAVI), and 249-269 (FKPFAWYRIAAGAVALGWLAM).

Belongs to the UppP family.

The protein resides in the cell inner membrane. It catalyses the reaction di-trans,octa-cis-undecaprenyl diphosphate + H2O = di-trans,octa-cis-undecaprenyl phosphate + phosphate + H(+). In terms of biological role, catalyzes the dephosphorylation of undecaprenyl diphosphate (UPP). Confers resistance to bacitracin. This Novosphingobium aromaticivorans (strain ATCC 700278 / DSM 12444 / CCUG 56034 / CIP 105152 / NBRC 16084 / F199) protein is Undecaprenyl-diphosphatase.